We begin with the raw amino-acid sequence, 343 residues long: Uroporphyrinogen decarboxylase (343 aa).

Substrate is bound by residues 24–28 (RQAGR), phenylalanine 43, aspartate 74, tyrosine 151, serine 206, and histidine 321.

It belongs to the uroporphyrinogen decarboxylase family. Homodimer.

Its subcellular location is the cytoplasm. It catalyses the reaction uroporphyrinogen III + 4 H(+) = coproporphyrinogen III + 4 CO2. The protein operates within porphyrin-containing compound metabolism; protoporphyrin-IX biosynthesis; coproporphyrinogen-III from 5-aminolevulinate: step 4/4. Functionally, catalyzes the decarboxylation of four acetate groups of uroporphyrinogen-III to yield coproporphyrinogen-III. This is Uroporphyrinogen decarboxylase from Thermosynechococcus vestitus (strain NIES-2133 / IAM M-273 / BP-1).